The sequence spans 212 residues: MAIGLVGKKCGMTRVFTEAGASIPVTVVEISANRITQVKNTDVDGYQAIQVTTGTRRDSRVTAAQKGHFAKAGVAAGRGVWEFRANDSDLEGREIGGEILADLFEQGQMVDVTGSSKGKGFQGPVKRHNFSMQDATHGNSVSHRAHGSTGQNQSPGKVFKGKKMAGQMGNKRVTVQGLEVISVDAEKGLLVIKGAIPGATGGDVIVRPSVKA.

A compositionally biased stretch (polar residues) spans 135-155 (ATHGNSVSHRAHGSTGQNQSP). Residues 135–162 (ATHGNSVSHRAHGSTGQNQSPGKVFKGK) are disordered. Glutamine 153 carries the N5-methylglutamine modification.

It belongs to the universal ribosomal protein uL3 family. Part of the 50S ribosomal subunit. Forms a cluster with proteins L14 and L19. Methylated by PrmB.

Functionally, one of the primary rRNA binding proteins, it binds directly near the 3'-end of the 23S rRNA, where it nucleates assembly of the 50S subunit. This Psychrobacter arcticus (strain DSM 17307 / VKM B-2377 / 273-4) protein is Large ribosomal subunit protein uL3.